The chain runs to 683 residues: Phenoloxidase 3 (683 aa).

Residues 1–48 (MADKKNLLLLFDHPTEPVFMDKGGNGTVFDVPASYVTDRYNKMCKKVQ) constitute a propeptide that is removed on maturation. An N-linked (GlcNAc...) asparagine glycan is attached at Asn-25. Cu cation contacts are provided by His-209, His-213, and His-239. The active-site Proton acceptor is the Glu-351. Asn-358 carries an N-linked (GlcNAc...) asparagine glycan. Positions 366, 370, and 406 each coordinate Cu cation. N-linked (GlcNAc...) asparagine glycosylation is found at Asn-492 and Asn-514. 2 disulfides stabilise this stretch: Cys-574/Cys-617 and Cys-576/Cys-624.

Belongs to the tyrosinase family. Cu(2+) serves as cofactor. Post-translationally, upon activation, a trypsin type protease cleaves prophenol oxidase to yield the active enzyme.

The protein resides in the secreted. It catalyses the reaction 2 L-dopa + O2 = 2 L-dopaquinone + 2 H2O. The enzyme catalyses L-tyrosine + O2 = L-dopaquinone + H2O. In terms of biological role, this is a copper-containing oxidase that functions in the formation of pigments such as melanins and other polyphenolic compounds. Catalyzes the rate-limiting conversions of tyrosine to DOPA, DOPA to DOPA-quinone and possibly 5,6 dihydroxyindole to indole-5'6 quinone. In Drosophila erecta (Fruit fly), this protein is Phenoloxidase 3 (PPO3).